A 402-amino-acid chain; its full sequence is Putative cytochrome P450 133B1 (402 aa).

Position 348 (cysteine 348) interacts with heme.

It belongs to the cytochrome P450 family. Heme is required as a cofactor.

The sequence is that of Putative cytochrome P450 133B1 (cyp133B1) from Xylella fastidiosa (strain 9a5c).